Here is a 299-residue protein sequence, read N- to C-terminus: Biphenyl-2,3-diol 1,2-dioxygenase (299 aa).

2 VOC domains span residues 6-121 (ELGY…IFYG) and 146-267 (GIGH…FGWG). Fe cation contacts are provided by His149, His212, and Glu263.

This sequence belongs to the extradiol ring-cleavage dioxygenase family. Homooctamer. Fe(2+) serves as cofactor.

It carries out the reaction biphenyl-2,3-diol + O2 = 2-hydroxy-6-oxo-6-phenylhexa-2,4-dienoate + H(+). It functions in the pathway xenobiotic degradation; biphenyl degradation; 2-hydroxy-2,4-pentadienoate and benzoate from biphenyl: step 3/4. This chain is Biphenyl-2,3-diol 1,2-dioxygenase (bphC), found in Sphingomonas paucimobilis (Pseudomonas paucimobilis).